The chain runs to 220 residues: Deep-sea actinoporin Cjtox I (220 aa).

Positions 1–19 (MNRLIILCLVAATIYSTIA) are cleaved as a signal peptide. Residues 20–42 (LPMKEDISNEERPTSVNEKPVKK) constitute a propeptide that is removed on maturation. Ser-96, Val-128, Ser-146, Pro-148, Tyr-174, Tyr-178, and Tyr-179 together coordinate phosphocholine. The trp-rich region, which is important for the binding to lipid membrane stretch occupies residues 146–161 (SVPYDYNWYSNWWNIK). The short motif at 185–187 (KGN) is the Cell attachment site, crucial for protein stability element.

Belongs to the actinoporin family. Sea anemone subfamily. As to quaternary structure, octamer or nonamer in membranes. Monomer in the soluble state. As to expression, expressed in tentacles.

The protein resides in the secreted. It is found in the nematocyst. It localises to the target cell membrane. Its function is as follows. Probably acts in predation. Pore-forming protein that forms cations-selective hydrophilic pores of around 1 nm and causes cytolysis. Pore formation is a multi-step process that involves specific recognition of membrane sphingomyelin (but neither cholesterol nor phosphatidylcholine) using aromatic rich region and adjacent phosphocholine (POC) binding site, firm binding to the membrane (mainly driven by hydrophobic interactions) accompanied by the transfer of the N-terminal region to the lipid-water interface and finally pore formation after oligomerization of monomers. Shows hemolytic activity on equine erythrocytes. Hemolysis is moderately inhibited in presence of sphingomyelin, suggesting that this protein targets sphingomyelin. The protein is Deep-sea actinoporin Cjtox I of Cribrinopsis japonica (Deep-sea anemone).